The sequence spans 769 residues: Apoptotic enhancer 1 protein (769 aa).

Disordered regions lie at residues 69–88, 265–396, and 451–518; these read PVRV…SQQY, SVEP…LDES, and PQLP…RSDD. The span at 275 to 284 shows a compositional bias: low complexity; that stretch reads QQQQPSPQMM. Residues 285-295 are compositionally biased toward basic and acidic residues; the sequence is KSEEFSEKRDL. Low complexity predominate over residues 339-353; that stretch reads STDPHSNHSSPSTSS. Polar residues-rich tracts occupy residues 354–378, 453–467, and 474–491; these read QKAP…TMTR, LPTS…TSET, and NSES…NNLE. ANK repeat units lie at residues 585–617 and 618–652; these read EGIT…AQDS and DGWT…TLSD. One can recognise an SH3 domain in the interval 684–746; sequence INTGKVYAAY…PRTYLALYPS (63 aa).

It belongs to the iASPP family. As to quaternary structure, interacts with cep-1/p53; the interaction inhibits pro-apoptotic activity of cep-1.

It is found in the nucleus. Functionally, negetively regulates apoptosis via its interaction with cep-1. This is Apoptotic enhancer 1 protein from Caenorhabditis elegans.